The sequence spans 338 residues: Ketol-acid reductoisomerase (NADP(+)) (338 aa).

The region spanning 1–181 (MKVFYDKDAD…GGGRAGIIET (181 aa)) is the KARI N-terminal Rossmann domain. Residues 24–27 (YGSQ), arginine 47, and serine 52 each bind NADP(+). Residue histidine 107 is part of the active site. Glycine 133 contacts NADP(+). The 146-residue stretch at 182-327 (NFREETETDL…SKLRAMMPWI (146 aa)) folds into the KARI C-terminal knotted domain. Mg(2+) contacts are provided by aspartate 190, glutamate 194, glutamate 226, and glutamate 230. Residue serine 251 participates in substrate binding.

The protein belongs to the ketol-acid reductoisomerase family. It depends on Mg(2+) as a cofactor.

It carries out the reaction (2R)-2,3-dihydroxy-3-methylbutanoate + NADP(+) = (2S)-2-acetolactate + NADPH + H(+). The catalysed reaction is (2R,3R)-2,3-dihydroxy-3-methylpentanoate + NADP(+) = (S)-2-ethyl-2-hydroxy-3-oxobutanoate + NADPH + H(+). Its pathway is amino-acid biosynthesis; L-isoleucine biosynthesis; L-isoleucine from 2-oxobutanoate: step 2/4. The protein operates within amino-acid biosynthesis; L-valine biosynthesis; L-valine from pyruvate: step 2/4. Involved in the biosynthesis of branched-chain amino acids (BCAA). Catalyzes an alkyl-migration followed by a ketol-acid reduction of (S)-2-acetolactate (S2AL) to yield (R)-2,3-dihydroxy-isovalerate. In the isomerase reaction, S2AL is rearranged via a Mg-dependent methyl migration to produce 3-hydroxy-3-methyl-2-ketobutyrate (HMKB). In the reductase reaction, this 2-ketoacid undergoes a metal-dependent reduction by NADPH to yield (R)-2,3-dihydroxy-isovalerate. The polypeptide is Ketol-acid reductoisomerase (NADP(+)) (Burkholderia thailandensis (strain ATCC 700388 / DSM 13276 / CCUG 48851 / CIP 106301 / E264)).